We begin with the raw amino-acid sequence, 267 residues long: Thiamine pyrophosphokinase 3 (267 aa).

The protein belongs to the thiamine pyrophosphokinase family.

The protein localises to the cytoplasm. The protein resides in the cytosol. It catalyses the reaction thiamine + ATP = thiamine diphosphate + AMP + H(+). It functions in the pathway cofactor biosynthesis; thiamine diphosphate biosynthesis; thiamine diphosphate from thiamine: step 1/1. In terms of biological role, catalyzes the phosphorylation of thiamine to thiamine pyrophosphate (TPP). TPP is an active cofactor for enzymes involved in glycolysis and energy production. Plant leaves require high levels of TPP for photosynthesis and carbohydrate metabolism. The chain is Thiamine pyrophosphokinase 3 (TPK3) from Oryza sativa subsp. japonica (Rice).